The sequence spans 334 residues: Trans-3-hydroxy-L-proline dehydratase (334 aa).

Cys91 acts as the Proton acceptor in catalysis. Residues 92-93 (GH), Asp250, and 255-256 (GT) contribute to the substrate site.

This sequence belongs to the proline racemase family.

The enzyme catalyses trans-3-hydroxy-L-proline = 1-pyrroline-2-carboxylate + H2O. Its function is as follows. Catalyzes the dehydration of trans-3-hydroxy-L-proline (t3LHyp) to Delta(1)-pyrroline-2-carboxylate (Pyr2C). Is likely involved in a degradation pathway that converts t3LHyp to L-proline, which allows B.cereus to grow on t3LHyp as a sole carbon source. Displays no proline racemase activity. This Bacillus cereus (strain ATCC 14579 / DSM 31 / CCUG 7414 / JCM 2152 / NBRC 15305 / NCIMB 9373 / NCTC 2599 / NRRL B-3711) protein is Trans-3-hydroxy-L-proline dehydratase.